The sequence spans 295 residues: Bifunctional protein FolD (295 aa).

NADP(+) contacts are provided by residues 165-167 (GRS), Ser190, and Ile231.

Belongs to the tetrahydrofolate dehydrogenase/cyclohydrolase family. As to quaternary structure, homodimer.

The enzyme catalyses (6R)-5,10-methylene-5,6,7,8-tetrahydrofolate + NADP(+) = (6R)-5,10-methenyltetrahydrofolate + NADPH. The catalysed reaction is (6R)-5,10-methenyltetrahydrofolate + H2O = (6R)-10-formyltetrahydrofolate + H(+). It participates in one-carbon metabolism; tetrahydrofolate interconversion. Functionally, catalyzes the oxidation of 5,10-methylenetetrahydrofolate to 5,10-methenyltetrahydrofolate and then the hydrolysis of 5,10-methenyltetrahydrofolate to 10-formyltetrahydrofolate. In Nitrosomonas europaea (strain ATCC 19718 / CIP 103999 / KCTC 2705 / NBRC 14298), this protein is Bifunctional protein FolD.